Reading from the N-terminus, the 160-residue chain is CXXC motif containing zinc binding protein (160 aa).

Residues cysteine 33, cysteine 36, cysteine 67, and cysteine 70 each coordinate Zn(2+). Serine 75 carries the phosphoserine modification.

This sequence belongs to the UPF0587 family. Monomer.

In Bos taurus (Bovine), this protein is CXXC motif containing zinc binding protein (CZIB).